Reading from the N-terminus, the 481-residue chain is Cytochrome P450 monooxygenase dpfgJ (481 aa).

Residues 23–43 (LVFTQAAVIGSILFVFLLGLY) form a helical membrane-spanning segment. N-linked (GlcNAc...) asparagine glycosylation occurs at Asn-338. Cys-427 is a binding site for heme.

Belongs to the cytochrome P450 family. Requires heme as cofactor.

It is found in the membrane. It participates in secondary metabolite biosynthesis; terpenoid biosynthesis. Functionally, cytochrome P450 monooxygenase; part of the gene cluster that mediates the biosynthesis of diterpenoid pyrones. The first step of the pathway is the synthesis of the alpha-pyrone moiety by the polyketide synthase dpfgA via condensation of one acetyl-CoA starter unit with 3 malonyl-CoA units and 2 methylations. The alpha-pyrone is then combined with geranylgeranyl pyrophosphate (GGPP) formed by the GGPP synthase dpfgD through the action of the prenyltransferase dpfgC to yield a linear alpha-pyrone diterpenoid. Subsequent steps in the diterpenoid pyrone biosynthetic pathway involve the decalin core formation, which is initiated by the epoxidation of the C10-C11 olefin by the FAD-dependent oxidoreductase dpfgE, and is followed by a cyclization cascade catalyzed by the terpene cyclase dpfgB. The short chain dehydrogenase/reductase dpfgG then oxidizes the 8S hydroxy group to a ketone and the short chain dehydrogenase/reductase dpfgH reduces the ketone to the 8R hydroxy group to yield higginsianin B. Higginsianin B is further methylated by the methyltransferase dpfgI to produce the intermediate named FDDP B. The cytochrome P450 monooxygenase dfgpJ then catalyzes a three-step oxidation at C-27 to generate a carboxylic acid as well as C-26 hydroxylation. Finally, methyltransferase dpfgK methylates the carboxylic acid generated by dpfgJ, yielding the final diterpenoid pyrones from the pathway which were named FDDP D and FDDP E. This Gibberella zeae (strain ATCC MYA-4620 / CBS 123657 / FGSC 9075 / NRRL 31084 / PH-1) (Wheat head blight fungus) protein is Cytochrome P450 monooxygenase dpfgJ.